A 371-amino-acid polypeptide reads, in one-letter code: Probable L-aspartate decarboxylase (371 aa).

Position 232 is an N6-(pyridoxal phosphate)lysine (Lys-232).

This sequence belongs to the group II decarboxylase family. MfnA subfamily. The cofactor is pyridoxal 5'-phosphate.

It catalyses the reaction L-aspartate + H(+) = beta-alanine + CO2. Its pathway is cofactor biosynthesis; coenzyme A biosynthesis. Functionally, catalyzes the decarboxylation of L-aspartate to produce beta-alanine. This is Probable L-aspartate decarboxylase from Pyrococcus furiosus (strain ATCC 43587 / DSM 3638 / JCM 8422 / Vc1).